Reading from the N-terminus, the 215-residue chain is HTH-type transcriptional repressor FabR (215 aa).

Residues 10-70 (KTRRSLVEAA…TMVDESGLML (61 aa)) form the HTH tetR-type domain. Positions 33–52 (SLREVAREAVIAPTSFYRHF) form a DNA-binding region, H-T-H motif.

Homodimer.

The protein resides in the cytoplasm. Its function is as follows. Represses the transcription of fabB, involved in unsaturated fatty acid (UFA) biosynthesis. By controlling UFA production, FabR directly influences the physical properties of the membrane bilayer. The polypeptide is HTH-type transcriptional repressor FabR (Escherichia coli (strain K12 / MC4100 / BW2952)).